The following is a 1178-amino-acid chain: Thrombospondin-2 (1178 aa).

An N-terminal signal peptide occupies residues methionine 1–alanine 22. In terms of domain architecture, Laminin G-like spans aspartate 25–threonine 221. Residues asparagine 157, asparagine 244, asparagine 317, and asparagine 322 are each glycosylated (N-linked (GlcNAc...) asparagine). The region spanning serine 324–serine 381 is the VWFC domain. 3 TSP type-1 domains span residues glutamate 387–aspartate 437, aspartate 443–proline 498, and asparagine 500–proline 555. Cystine bridges form between cysteine 399/cysteine 431, cysteine 403/cysteine 436, cysteine 414/cysteine 421, cysteine 455/cysteine 492, cysteine 459/cysteine 497, cysteine 470/cysteine 482, cysteine 512/cysteine 549, cysteine 516/cysteine 554, cysteine 527/cysteine 539, cysteine 559/cysteine 570, cysteine 564/cysteine 580, cysteine 583/cysteine 594, cysteine 600/cysteine 616, cysteine 607/cysteine 625, cysteine 628/cysteine 652, cysteine 658/cysteine 671, cysteine 665/cysteine 684, cysteine 686/cysteine 697, cysteine 713/cysteine 721, cysteine 726/cysteine 746, cysteine 762/cysteine 782, cysteine 785/cysteine 805, cysteine 821/cysteine 841, cysteine 844/cysteine 864, cysteine 882/cysteine 902, cysteine 918/cysteine 938, and cysteine 954/cysteine 1175. N-linked (GlcNAc...) asparagine glycosylation occurs at asparagine 463. The 41-residue stretch at proline 555–glutamate 595 folds into the EGF-like 1 domain. A glycan (N-linked (GlcNAc...) asparagine) is linked at asparagine 590. Residues proline 654–glycine 698 enclose the EGF-like 2 domain. 8 TSP type-3 repeats span residues glutamate 699–glutamine 734, glutamate 735–glutamine 770, phenylalanine 771–glutamine 793, isoleucine 794–glutamine 829, serine 830–glutamine 852, threonine 853–glutamine 890, alanine 891–glutamine 926, and glutamate 927–glutamate 962. Asparagine 716 carries an N-linked (GlcNAc...) asparagine glycan. Residues phenylalanine 737 to aspartate 760 are disordered. A compositionally biased stretch (acidic residues) spans cysteine 746–lysine 759. Positions glutamine 852–aspartate 941 are disordered. The segment covering threonine 853 to glutamate 872 has biased composition (acidic residues). Basic and acidic residues predominate over residues alanine 891–alanine 901. The segment covering cysteine 902 to isoleucine 911 has biased composition (acidic residues). Basic and acidic residues-rich tracts occupy residues proline 912 to proline 924 and glycine 931 to aspartate 940. The Cell attachment site motif lies at arginine 934–aspartate 936. Positions arginine 966–alanine 1178 constitute a TSP C-terminal domain. Asparagine 1075 carries N-linked (GlcNAc...) asparagine glycosylation.

It belongs to the thrombospondin family. Homotrimer; disulfide-linked. Can bind to fibrinogen, fibronectin, laminin and type V collagen.

Its function is as follows. Adhesive glycoprotein that mediates cell-to-cell and cell-to-matrix interactions. In Gallus gallus (Chicken), this protein is Thrombospondin-2 (THBS2).